Here is a 176-residue protein sequence, read N- to C-terminus: Late lactation protein (176 aa).

The signal sequence occupies residues 1–18 (MKVLFFTIALSLFSILHA). Cys78 and Cys171 are disulfide-bonded.

It belongs to the calycin superfamily. Lipocalin family. As to expression, mammary gland. Secreted in milk.

The protein localises to the secreted. Probably serves a role in the transport of a small ligand released during the hydrolysis of milk fat. The sequence is that of Late lactation protein from Trichosurus vulpecula (Brush-tailed possum).